The primary structure comprises 259 residues: Global transcriptional regulator CodY (259 aa).

Positions 1-155 are GAF domain; that stretch reads MDLLSKTRRI…GATVVGMEIL (155 aa). The H-T-H motif DNA-binding region spans 203 to 222; the sequence is ASKIADRVGITRSVIVNALR.

The protein belongs to the CodY family.

The protein localises to the cytoplasm. DNA-binding global transcriptional regulator which is involved in the adaptive response to starvation and acts by directly or indirectly controlling the expression of numerous genes in response to nutrient availability. During rapid exponential growth, CodY is highly active and represses genes whose products allow adaptation to nutrient depletion. The protein is Global transcriptional regulator CodY of Brevibacillus brevis (strain 47 / JCM 6285 / NBRC 100599).